Reading from the N-terminus, the 281-residue chain is UPF0162 protein XF_1494 (281 aa).

TPR repeat units follow at residues 193–226 (VRIL…VPNQ) and 227–260 (PEAL…YPST).

The protein belongs to the UPF0162 family.

In Xylella fastidiosa (strain 9a5c), this protein is UPF0162 protein XF_1494.